Reading from the N-terminus, the 202-residue chain is Outer-membrane lipoprotein carrier protein (202 aa).

Positions 1-20 are cleaved as a signal peptide; that stretch reads MKKQLLIGSVLLVASSQVWA.

The protein belongs to the LolA family. In terms of assembly, monomer.

The protein resides in the periplasm. Its function is as follows. Participates in the translocation of lipoproteins from the inner membrane to the outer membrane. Only forms a complex with a lipoprotein if the residue after the N-terminal Cys is not an aspartate (The Asp acts as a targeting signal to indicate that the lipoprotein should stay in the inner membrane). The polypeptide is Outer-membrane lipoprotein carrier protein (Aeromonas salmonicida (strain A449)).